Reading from the N-terminus, the 228-residue chain is Protein crossbronx homolog (228 aa).

A UBC core domain is found at 14–168 (LQEYKILAEY…VEQCVEDSQR (155 aa)).

Belongs to the ubiquitin-conjugating enzyme family. FTS subfamily.

This chain is Protein crossbronx homolog, found in Anopheles gambiae (African malaria mosquito).